The chain runs to 218 residues: Small ribosomal subunit protein uS3c (218 aa).

In terms of domain architecture, KH type-2 spans valine 47–alanine 118.

The protein belongs to the universal ribosomal protein uS3 family. As to quaternary structure, part of the 30S ribosomal subunit.

It localises to the plastid. Its subcellular location is the chloroplast. The sequence is that of Small ribosomal subunit protein uS3c (rps3) from Ginkgo biloba (Ginkgo).